Here is a 173-residue protein sequence, read N- to C-terminus: Nicotinamide-nucleotide adenylyltransferase (173 aa).

Belongs to the archaeal NMN adenylyltransferase family.

It is found in the cytoplasm. It carries out the reaction beta-nicotinamide D-ribonucleotide + ATP + H(+) = diphosphate + NAD(+). It participates in cofactor biosynthesis; NAD(+) biosynthesis; NAD(+) from nicotinamide D-ribonucleotide: step 1/1. This is Nicotinamide-nucleotide adenylyltransferase from Methanosarcina acetivorans (strain ATCC 35395 / DSM 2834 / JCM 12185 / C2A).